Here is a 120-residue protein sequence, read N- to C-terminus: Small ribosomal subunit protein uS19 (120 aa).

This sequence belongs to the universal ribosomal protein uS19 family.

The sequence is that of Small ribosomal subunit protein uS19 (RPS15) from Naegleria gruberi (Amoeba).